Here is a 213-residue protein sequence, read N- to C-terminus: Peroxynitrite isomerase (213 aa).

The segment covering Met1–Ala10 has biased composition (low complexity). The disordered stretch occupies residues Met1–Ala26. The short motif at Gly51–Gly57 is the GXWXGXG element. His203 is a heme b binding site.

Belongs to the nitrobindin family. As to quaternary structure, homodimer. Heme b serves as cofactor.

It catalyses the reaction peroxynitrite = nitrate. Its pathway is nitrogen metabolism. In terms of biological role, heme-binding protein able to scavenge peroxynitrite and to protect free L-tyrosine against peroxynitrite-mediated nitration, by acting as a peroxynitrite isomerase that converts peroxynitrite to nitrate. Therefore, this protein likely plays a role in peroxynitrite sensing and in the detoxification of reactive nitrogen and oxygen species (RNS and ROS, respectively). Is able to bind nitric oxide (NO) in vitro, but may act as a sensor of peroxynitrite levels in vivo. The polypeptide is Peroxynitrite isomerase (Parafrankia sp. (strain EAN1pec)).